A 368-amino-acid chain; its full sequence is 4-hydroxy-3-methylbut-2-en-1-yl diphosphate synthase (flavodoxin) (368 aa).

[4Fe-4S] cluster-binding residues include cysteine 271, cysteine 274, cysteine 306, and glutamate 313.

The protein belongs to the IspG family. The cofactor is [4Fe-4S] cluster.

The enzyme catalyses (2E)-4-hydroxy-3-methylbut-2-enyl diphosphate + oxidized [flavodoxin] + H2O + 2 H(+) = 2-C-methyl-D-erythritol 2,4-cyclic diphosphate + reduced [flavodoxin]. It functions in the pathway isoprenoid biosynthesis; isopentenyl diphosphate biosynthesis via DXP pathway; isopentenyl diphosphate from 1-deoxy-D-xylulose 5-phosphate: step 5/6. Converts 2C-methyl-D-erythritol 2,4-cyclodiphosphate (ME-2,4cPP) into 1-hydroxy-2-methyl-2-(E)-butenyl 4-diphosphate. This Haemophilus influenzae (strain 86-028NP) protein is 4-hydroxy-3-methylbut-2-en-1-yl diphosphate synthase (flavodoxin).